The following is a 423-amino-acid chain: COP9 signalosome complex subunit 3 (423 aa).

At Ala2 the chain carries N-acetylalanine. The PCI domain occupies 197 to 365; it reads NFERALYFYE…GMVSFHDNPE (169 aa). The disordered stretch occupies residues 402 to 423; that stretch reads QFVQKSMGSQEDDSGNKPSSYS. A phosphoserine mark is found at Ser407, Ser410, and Ser423.

The protein belongs to the CSN3 family. As to quaternary structure, component of the CSN complex, composed of COPS1/GPS1, COPS2, COPS3, COPS4, COPS5, COPS6, COPS7 (COPS7A or COPS7B), COPS8 and COPS9. In the complex, it probably interacts directly with COPS1, COPS4, COPS8 and COPS9. Interacts with CK2 and PKD. Interacts with the translation initiation factor EIF3S6 and IKBKG. Interacts with ERCC6.

It localises to the cytoplasm. It is found in the nucleus. Its function is as follows. Component of the COP9 signalosome complex (CSN), a complex involved in various cellular and developmental processes. The CSN complex is an essential regulator of the ubiquitin (Ubl) conjugation pathway by mediating the deneddylation of the cullin subunits of SCF-type E3 ligase complexes, leading to decrease the Ubl ligase activity of SCF-type complexes such as SCF, CSA or DDB2. The complex is also involved in phosphorylation of p53/TP53, c-jun/JUN, IkappaBalpha/NFKBIA, ITPK1 and IRF8/ICSBP, possibly via its association with CK2 and PKD kinases. CSN-dependent phosphorylation of TP53 and JUN promotes and protects degradation by the Ubl system, respectively. Essential to maintain the survival of epiblast cells and thus the development of the postimplantation embryo. The protein is COP9 signalosome complex subunit 3 (COPS3) of Bos taurus (Bovine).